Reading from the N-terminus, the 677-residue chain is Potassium channel KAT1 (677 aa).

The Cytoplasmic portion of the chain corresponds to 1–63 (MSISWTRNFF…PFNPRYRAWE (63 aa)). Residues 64-84 (MWLVLLVIYSAWICPFQFAFI) traverse the membrane as a helical segment. The Extracellular portion of the chain corresponds to 85–90 (TYKKDA). The chain crosses the membrane as a helical span at residues 91–111 (IFIIDNIVNGFFAIDIILTFF). The Cytoplasmic portion of the chain corresponds to 112–134 (VAYLDSHSYLLVDSPKKIAIRYL). A helical transmembrane segment spans residues 135 to 155 (STWFAFDVCSTAPFQPLSLLF). Over 156–165 (NYNGSELGFR) the chain is Extracellular. The helical; Voltage-sensor transmembrane segment at 166 to 186 (ILSMLRLWRLRRVSSLFARLE) threads the bilayer. At 187 to 200 (KDIRFNYFWIRCTK) the chain is on the cytoplasmic side. The chain crosses the membrane as a helical span at residues 201-221 (LISVTLFAIHCAGCFNYLIAD). The Extracellular segment spans residues 222 to 248 (RYPNPRKTWIGAVYPNFKEASLWNRYV). An intramembrane region (pore-forming) is located at residues 249–268 (TALYWSITTLTTTGYGDFHA). Residues 269-272 (ENPR) are Extracellular-facing. Residues 273–293 (EMLFDIFFMMFNLGLTAYLIG) form a helical membrane-spanning segment. Residues 294 to 677 (NMTNLVVHWT…DGDHLYFSSN (384 aa)) are Cytoplasmic-facing. 377-496 (LFQGVSRNFL…RVIMNNLFMK (120 aa)) serves as a coordination point for a nucleoside 3',5'-cyclic phosphate. Positions 568 to 577 (IERAKVERSS) are enriched in basic and acidic residues. The tract at residues 568 to 601 (IERAKVERSSSETAGRSYANDSSKKDPYCSSSNQ) is disordered. A KHA domain is found at 612 to 677 (RVTIHMMSES…DGDHLYFSSN (66 aa)).

The protein belongs to the potassium channel family. Plant (TC 1.A.1.4) subfamily. As to quaternary structure, the potassium channel is probably composed of a homo- or heterotetrameric complex of pore-forming subunits. May interact with AKT2 and KAT2. Interacts with SLAC1 and SLAH3. Expressed in guard cells, and in roots.

It is found in the membrane. In terms of biological role, highly selective inward-rectifying potassium channel. This voltage-gated channel could mediate long-term potassium influx into guard cells leading to stomatal opening. Assuming opened or closed conformations in response to the voltage difference across the membrane, the channel is activated by hyperpolarization. The channel activity is enhanced upon external acidification. Also permeable to ammonium ions. Blocked by tetraethylammonium and barium ions. The polypeptide is Potassium channel KAT1 (KAT1) (Arabidopsis thaliana (Mouse-ear cress)).